Consider the following 975-residue polypeptide: Glycine dehydrogenase (decarboxylating) (975 aa).

Position 723 is an N6-(pyridoxal phosphate)lysine (K723).

The protein belongs to the GcvP family. The glycine cleavage system is composed of four proteins: P, T, L and H. It depends on pyridoxal 5'-phosphate as a cofactor.

The catalysed reaction is N(6)-[(R)-lipoyl]-L-lysyl-[glycine-cleavage complex H protein] + glycine + H(+) = N(6)-[(R)-S(8)-aminomethyldihydrolipoyl]-L-lysyl-[glycine-cleavage complex H protein] + CO2. The glycine cleavage system catalyzes the degradation of glycine. The P protein binds the alpha-amino group of glycine through its pyridoxal phosphate cofactor; CO(2) is released and the remaining methylamine moiety is then transferred to the lipoamide cofactor of the H protein. The protein is Glycine dehydrogenase (decarboxylating) of Burkholderia ambifaria (strain ATCC BAA-244 / DSM 16087 / CCUG 44356 / LMG 19182 / AMMD) (Burkholderia cepacia (strain AMMD)).